A 267-amino-acid polypeptide reads, in one-letter code: MKAAVLTLAVLFLTGSQARHFWQQDEPPQSPWDRVKDLATVYVDVLKDSGRDYVSQFEGSALGKQLNLKLLDNWDSVTSTFSKLREQLGPVTQEFWDNLEKETEGLRQEMSKDLEEVKAKVQPYLDDFQKKWQEEMELYRQKVEPLRAELQEGARQKLHELQEKLSPLGEEMRDRARAHVDALRTHLAPYSDELRQRLAARLEALKENGGARLAEYHAKATEHLSTLSEKAKPALEDLRQGLLPVLESFKVSFLSALEEYTKKLNTQ.

An N-terminal signal peptide occupies residues 1-18 (MKAAVLTLAVLFLTGSQA). 2 tandem repeats follow at residues 68 to 89 (LKLL…EQLG) and 90 to 111 (PVTQ…QEMS). The tract at residues 68–267 (LKLLDNWDSV…EEYTKKLNTQ (200 aa)) is 10 X approximate tandem repeats. Methionine sulfoxide is present on M110. Residues 112–122 (KDLEEVKAKVQ) form a 3; half-length repeat. 5 consecutive repeat copies span residues 123 to 144 (PYLD…QKVE), 145 to 166 (PLRA…EKLS), 167 to 188 (PLGE…THLA), 189 to 210 (PYSD…ENGG), and 211 to 232 (ARLA…EKAK). M136 carries the methionine sulfoxide modification. One copy of the 9; half-length repeat lies at 233–243 (PALEDLRQGLL). Repeat unit 10 spans residues 244 to 267 (PVLESFKVSFLSALEEYTKKLNTQ).

It belongs to the apolipoprotein A1/A4/E family. As to quaternary structure, homodimer. Interacts with APOA1BP and CLU. Component of a sperm activating protein complex (SPAP), consisting of APOA1, an immunoglobulin heavy chain, an immunoglobulin light chain and albumin. Interacts with NDRG1. Interacts with SCGB3A2. Interacts with NAXE and YJEFN3. Post-translationally, glycosylated. Palmitoylated. In terms of processing, phosphorylation sites are present in the extracellular medium. Major protein of plasma HDL, also found in chylomicrons.

The protein localises to the secreted. Functionally, participates in the reverse transport of cholesterol from tissues to the liver for excretion by promoting cholesterol efflux from tissues and by acting as a cofactor for the lecithin cholesterol acyltransferase (LCAT). As part of the SPAP complex, activates spermatozoa motility. This is Apolipoprotein A-I (APOA1) from Pan troglodytes (Chimpanzee).